The primary structure comprises 1720 residues: Merozoite surface protein 1 (1720 aa).

The first 19 residues, 1–19, serve as a signal peptide directing secretion; it reads MKIIFFLCSFLFFIINTQC. Low complexity predominate over residues 63 to 112; sequence ASAQSGASAQSGASAQSGASAQSGASAQSGASAQSGTSGPSGPSGTSPSS. Positions 63 to 137 are disordered; it reads ASAQSGASAQ…PPADASDSDA (75 aa). The span at 113-122 shows a compositional bias: polar residues; that stretch reads RSNTLPRSNT. The span at 123–132 shows a compositional bias: low complexity; that stretch reads SSGASPPADA. Residues 474–519 are a coiled coil; the sequence is INNIKKKIDLEEKNINHTKEQNKKLLEDYEKSKKDYEELLEKFYEM. Disordered stretches follow at residues 723–775, 908–955, 1249–1278, and 1470–1491; these read SETT…PPKE, TGTS…SGPA, TPPQ…TQIP, and KEKF…DEQK. Positions 743–753 are enriched in acidic residues; the sequence is EVTEETEETEE. Over residues 908-946 the composition is skewed to low complexity; it reads TGTSSTSSPGNTTVNTAQSATHSNSQNQQSNASSTNTQN. Over residues 1264 to 1278 the composition is skewed to polar residues; the sequence is VSGSSGSTKEETQIP. Over residues 1475 to 1484 the composition is skewed to pro residues; the sequence is SSPPTTPPSP. 2 consecutive EGF-like domains span residues 1611-1651 and 1652-1693; these read HQCV…VENP and NPTC…YPLF. 6 disulfides stabilise this stretch: cysteine 1613–cysteine 1624, cysteine 1618–cysteine 1634, cysteine 1636–cysteine 1647, cysteine 1655–cysteine 1668, cysteine 1662–cysteine 1682, and cysteine 1684–cysteine 1698. Serine 1699 is lipidated: GPI-anchor amidated serine. Residues 1700-1720 constitute a propeptide, removed in mature form; sequence SSNFLGISFLLILMLILYSFI.

As to quaternary structure, forms a complex composed of subunits p83, p30, p38, and p42 which remain non-covalently associated; the complex is formed at the merozoite surface prior to egress from host erythrocytes. Forms a complex composed of processed MSP1 subunits, MSP6 subunit p36 and MSP7; the complex is formed at the merozoite surface prior to egress from host erythrocytes. Within the complex, interacts (via subunit p38) with MSP6 subunit p36 and (via subunits p83, p30 and p38) with MSP7 (via subunit p22). Forms a complex composed of MSP1, MSP6, DBLMSP1 and DBLMSP2. Within the complex, interacts (via subunit p38) with DBLMSP1 and DBLMSP2. Forms a complex composed of MSP1, and rhoptry proteins RhopH3, RAP1 and CLAG9/RhopH3. Within the complex, interacts (via subunits p42 and p19) with RhopH3 (via C-terminus). Forms a complex composed of MSP1, MSP6, MSP7, MSP9 and MSP3; within the complex, MSP6 and MSP9 mediate the binding to the host erythrocyte. Interacts (via subunits p19 and p42) with MSP9; the interaction is direct; MSP1 subunits p19 or p42, and MSP9 form a co-ligand complex that interacts with host SLC4A1/Band 3 protein. May interact with PFD6. Interacts with host spectrin. In terms of assembly, interacts with host glycophorin GYPA in a sialic acid-independent manner. Interacts with host proinflammatory cytokine S100P; the interaction blocks S100P inflammatory and chemotactic activities. As to quaternary structure, interacts with host SLC4A1/Band 3 (via 5ABC region) on the host erythrocyte surface in a sialic acid-independent manner. Post-translationally, the p190 precursor is cleaved by SUB1 prior to merozoite egress into 4 subunits p83, p30, p38, and p42 which remain non-covalently associated. SUB1-mediated proteolytic cleavage occurs in an orderly manner; the first cleavage occurs at the p30/p38 site, followed by cleavage at the p83/p30 site, in the 3D7 strain a second cleavage occurs at the N-terminus of p83, the last cleavage occurs at the p38/p42 site. The order of cleavage is essential for parasite viability. SUB1-mediated processing is essential for merozoite egress. In a second processing step during erythrocyte invasion, p42 is cleaved by SUB2 into p33 and p19; the latter remains attached to the merozoite surface via its GPI-anchor and is endocytosed during the subsequent ring stage.

It is found in the cell membrane. The protein localises to the secreted. It localises to the vacuole membrane. Functionally, during the asexual blood stage, involved in merozoite egress from host erythrocytes possibly via its interaction with the host cytoskeleton protein spectrin resulting in the destabilization of the host cytoskeleton and thus leading to erythrocyte cell membrane rupture. Involved in the binding to host erythrocytes and is required for host erythrocyte invasion. Its function is as follows. By binding to host proinflammatory cytokine S100P may interfere with host immune responses. Involved in merozoite invasion of host erythrocytes. May play a role in the biogenesis and/or function of the food vacuole during the intraerythrocytic development. In Plasmodium falciparum (isolate 3D7), this protein is Merozoite surface protein 1.